The primary structure comprises 213 residues: tRNA (guanine-N(7)-)-methyltransferase (213 aa).

The S-adenosyl-L-methionine site is built by D40, E65, N92, and D118. Residue D118 is part of the active site. Residues K122 and D154 each coordinate substrate.

Belongs to the class I-like SAM-binding methyltransferase superfamily. TrmB family.

The enzyme catalyses guanosine(46) in tRNA + S-adenosyl-L-methionine = N(7)-methylguanosine(46) in tRNA + S-adenosyl-L-homocysteine. It participates in tRNA modification; N(7)-methylguanine-tRNA biosynthesis. Catalyzes the formation of N(7)-methylguanine at position 46 (m7G46) in tRNA. This chain is tRNA (guanine-N(7)-)-methyltransferase, found in Synechococcus elongatus (strain ATCC 33912 / PCC 7942 / FACHB-805) (Anacystis nidulans R2).